The sequence spans 347 residues: NADH-ubiquinone oxidoreductase chain 2 (347 aa).

A run of 10 helical transmembrane segments spans residues 1–21 (MNPL…LIVM), 25–45 (HWFM…PLLT), 67–87 (SMLL…WSIM), 111–131 (FHFW…LILL), 144–164 (MIMP…SIAI), 178–198 (IMAY…AYNP), 201–221 (TLLN…LLMI), 237–257 (LPLI…LPPL), 274–294 (SSII…YFYT), and 326–346 (LPLM…MPIL).

The protein belongs to the complex I subunit 2 family. Core subunit of respiratory chain NADH dehydrogenase (Complex I) which is composed of 45 different subunits. Interacts with TMEM242.

The protein localises to the mitochondrion inner membrane. The catalysed reaction is a ubiquinone + NADH + 5 H(+)(in) = a ubiquinol + NAD(+) + 4 H(+)(out). Core subunit of the mitochondrial membrane respiratory chain NADH dehydrogenase (Complex I) which catalyzes electron transfer from NADH through the respiratory chain, using ubiquinone as an electron acceptor. Essential for the catalytic activity and assembly of complex I. In Myotis simus (Velvety myotis), this protein is NADH-ubiquinone oxidoreductase chain 2.